A 140-amino-acid chain; its full sequence is Profilin (140 aa).

It belongs to the profilin family. Occurs in many kinds of cells as a complex with monomeric actin in a 1:1 ratio.

In terms of biological role, binds to actin and affects the structure of the cytoskeleton. At high concentrations, profilin prevents the polymerization of actin, whereas it enhances it at low concentrations. By binding to PIP2, it inhibits the formation of IP3 and DG. This chain is Profilin, found in Suberites domuncula (Sponge).